Consider the following 153-residue polypeptide: Proline-rich membrane anchor 1 (153 aa).

An N-terminal signal peptide occupies residues Met1–Ala35. The Extracellular portion of the chain corresponds to Glu36–Gly92. Residues Pro56 to Pro70 enclose the PRAD domain. Pro residues predominate over residues Pro59 to Arg71. Residues Pro59–Asn79 form a disordered region. N-linked (GlcNAc...) asparagine glycosylation is present at Asn79. Residues Leu93–Ile113 form a helical membrane-spanning segment. At Cys114–Val153 the chain is on the cytoplasmic side. The segment at Ala133–Val153 is disordered.

As to quaternary structure, interacts with ACHE, probably through disulfide bonds. Isoforms 1 and 2 are expressed in the adult brain. In matured cortical neurons, only isoform 1 is detectable.

It localises to the cell membrane. Its subcellular location is the cell junction. It is found in the synapse. In terms of biological role, required to anchor acetylcholinesterase (ACHE) to the basal lamina of the neuromuscular junction and to the membrane of neuronal synapses in brain. Organizes ACHE into tetramers. The chain is Proline-rich membrane anchor 1 (Prima1) from Rattus norvegicus (Rat).